Consider the following 102-residue polypeptide: Large ribosomal subunit protein bL21 (102 aa).

The protein belongs to the bacterial ribosomal protein bL21 family. Part of the 50S ribosomal subunit. Contacts protein L20.

Its function is as follows. This protein binds to 23S rRNA in the presence of protein L20. This chain is Large ribosomal subunit protein bL21, found in Lawsonia intracellularis.